A 1305-amino-acid polypeptide reads, in one-letter code: Myosin-IIIb (1305 aa).

A Protein kinase domain is found at 15-281 (WEIIETIGKG…VTHLLDHPFI (267 aa)). Residues 21–29 (IGKGTYGKV) and lysine 44 contribute to the ATP site. Aspartate 144 (proton acceptor) is an active-site residue. The region spanning 331 to 1046 (CLEDDLVNLE…HVEQLNLLLR (716 aa)) is the Myosin motor domain. An actin-binding region spans residues 927–949 (LMDLLSKMVVGQPHFIRCIKPND). IQ domains lie at 1048–1077 (VMGR…KREK) and 1075–1104 (REKG…RRSE). Disordered stretches follow at residues 1093-1164 (RKLK…VTSG) and 1200-1233 (SPCE…MLSS).

It in the C-terminal section; belongs to the TRAFAC class myosin-kinesin ATPase superfamily. Myosin family. In the N-terminal section; belongs to the protein kinase superfamily. STE Ser/Thr protein kinase family. As to quaternary structure, interacts (via C-terminus) with ESPN. Interacts (via C-terminus) with ESPNL. In terms of tissue distribution, expressed in the cochlear hair cells (at protein level). Expressed in utricle hair bundles (at protein level).

The protein localises to the cytoplasm. It localises to the cytoskeleton. The protein resides in the cell projection. It is found in the stereocilium. It catalyses the reaction L-seryl-[protein] + ATP = O-phospho-L-seryl-[protein] + ADP + H(+). The enzyme catalyses L-threonyl-[protein] + ATP = O-phospho-L-threonyl-[protein] + ADP + H(+). Probable actin-based motor with a protein kinase activity. Required for normal cochlear hair bundle development and hearing. Plays an important role in the early steps of cochlear hair bundle morphogenesis. Influences the number and lengths of stereocilia to be produced and limits the growth of microvilli within the forming auditory hair bundles thereby contributing to the architecture of the hair bundle, including its staircase pattern. Involved in the elongation of actin in stereocilia tips by transporting the actin regulatory factor ESPN to the plus ends of actin filaments. This is Myosin-IIIb (Myo3b) from Mus musculus (Mouse).